The chain runs to 144 residues: Tryparedoxin (144 aa).

The Thioredoxin domain occupies 2–144 (SGLAKYLPGA…PDGANFPWPN (143 aa)). A disulfide bond links cysteine 40 and cysteine 43.

This sequence belongs to the thioredoxin family.

Acts as a thiol-disulfide oxidoreductase. It is spontaneously reduced by trypanothione. The sequence is that of Tryparedoxin from Trypanosoma brucei brucei.